A 474-amino-acid chain; its full sequence is Cysteine--tRNA ligase (474 aa).

C29 contacts Zn(2+). A 'HIGH' region motif is present at residues 31-41; sequence ITPYDHVHVGH. Residues C215, H240, and E244 each coordinate Zn(2+). The 'KMSKS' region motif lies at 273–277; sequence KMSKS. K276 is an ATP binding site.

It belongs to the class-I aminoacyl-tRNA synthetase family. Requires Zn(2+) as cofactor.

The protein resides in the cytoplasm. The catalysed reaction is tRNA(Cys) + L-cysteine + ATP = L-cysteinyl-tRNA(Cys) + AMP + diphosphate. In Pyrobaculum aerophilum (strain ATCC 51768 / DSM 7523 / JCM 9630 / CIP 104966 / NBRC 100827 / IM2), this protein is Cysteine--tRNA ligase.